The primary structure comprises 341 residues: Protein arginine N-methyltransferase 1 (341 aa).

The region spanning 20-315 (ADYYFDSYSH…DCAPFDKNQR (296 aa)) is the SAM-dependent MTase PRMT-type domain. Residues histidine 33, arginine 42, glycine 66, aspartate 88, and glutamate 117 each contribute to the S-adenosyl-L-methionine site. Catalysis depends on residues glutamate 132 and glutamate 141.

The protein belongs to the class I-like SAM-binding methyltransferase superfamily. Protein arginine N-methyltransferase family.

It is found in the nucleus. The protein resides in the cytoplasm. The protein localises to the cytosol. It carries out the reaction L-arginyl-[protein] + 2 S-adenosyl-L-methionine = N(omega),N(omega)-dimethyl-L-arginyl-[protein] + 2 S-adenosyl-L-homocysteine + 2 H(+). The catalysed reaction is L-arginyl-[protein] + S-adenosyl-L-methionine = N(omega)-methyl-L-arginyl-[protein] + S-adenosyl-L-homocysteine + H(+). Functionally, arginine methyltransferase that methylates the guanidino nitrogens of arginyl residues present in proteins such as ribonucleoproteins and histones. This Dictyostelium discoideum (Social amoeba) protein is Protein arginine N-methyltransferase 1 (prmt1).